Reading from the N-terminus, the 99-residue chain is Large ribosomal subunit protein uL23 (99 aa).

The protein belongs to the universal ribosomal protein uL23 family. In terms of assembly, part of the 50S ribosomal subunit. Contacts protein L29, and trigger factor when it is bound to the ribosome.

Its function is as follows. One of the early assembly proteins it binds 23S rRNA. One of the proteins that surrounds the polypeptide exit tunnel on the outside of the ribosome. Forms the main docking site for trigger factor binding to the ribosome. The polypeptide is Large ribosomal subunit protein uL23 (Pseudomonas entomophila (strain L48)).